A 116-amino-acid polypeptide reads, in one-letter code: UPF0342 protein RBAM_010030 (116 aa).

It belongs to the UPF0342 family.

This chain is UPF0342 protein RBAM_010030, found in Bacillus velezensis (strain DSM 23117 / BGSC 10A6 / LMG 26770 / FZB42) (Bacillus amyloliquefaciens subsp. plantarum).